The primary structure comprises 647 residues: MITVPWSVFLIWTKIGLLLDMAPYSVAAKPCPSVCRCDVGFIYCNDRDLTSIPTGIPEDATNLFLQNNQINNAGIPSELKNLRRVERIFLYHNSLDEFPTNLPKYVKELHLQENNIRTITYDSLSQIPYLEELHLDDNSVSAVSIEDGAFRDNIYLRLLFLSRNHLSTIPWGLPKTIEELRLDDNRISTISELSLQDLTNLKRLVLDGNLLNNHGLGDKVFMNLVNLTELSLVRNSLTAAPVNLPGTNLRKLYLQENHINHVPPNAFSYLRQLYRLDMSNNNLSNLPQGVFDDLDNITQLFLRNNPWHCGCKMKWVRDWLQSLPLKVNVRGLMCQAPEKVRGMAIKDLNAELFDCKDDMSTIQITTAVPNTLYPAQGHWPVSVTKQPDIKTPNLNKNYRTTASPVRKIITIFVKSVSTETIHISWKVALPMTALRLSWLKMGHSPAFGSITETIVTGDRSDYLLTALEPESPYRVCMVPMETSNIYLSDETPECIETETAPLKMYNPTTTLNREQEKEPYKNSSVPLAAIIGGAVALVALALLALVCWYVHRNGALFSRHCAYSKGRRRKDDYAEAGTKKDNSILEIRETSFQMIPITNDQVSKEEFVIHTIFPPNGMNLYKNSHSESSSNRSYRDSGIPDSDHSHS.

The signal sequence occupies residues 1–28 (MITVPWSVFLIWTKIGLLLDMAPYSVAA). The Extracellular segment spans residues 29-526 (KPCPSVCRCD…KEPYKNSSVP (498 aa)). The LRRNT domain occupies 30-62 (PCPSVCRCDVGFIYCNDRDLTSIPTGIPEDATN). 2 disulfide bridges follow: Cys31/Cys37 and Cys35/Cys44. LRR repeat units follow at residues 58–82 (EDATNLFLQNNQINNAGIPSELKNL), 83–105 (RRVERIFLYHNSLDEFPTNLPKY), 107–126 (KELHLQENNIRTITYDSLSQ), 127–152 (IPYLEELHLDDNSVSAVSIEDGAFRD), 154–179 (IYLRLLFLSRNHLSTIPWGLPKTIEE), 181–197 (RLDDNRISTISELSLQD), 198–223 (LTNLKRLVLDGNLLNNHGLGDKVFMN), 225–246 (VNLTELSLVRNSLTAAPVNLPG), 247–269 (TNLRKLYLQENHINHVPPNAFSY), and 270–293 (LRQLYRLDMSNNNLSNLPQGVFDD). The N-linked (GlcNAc...) asparagine glycan is linked to Asn226. An LRRCT domain is found at 305–356 (NPWHCGCKMKWVRDWLQSLPLKVNVRGLMCQAPEKVRGMAIKDLNAELFDCK). Cys309 and Cys334 form a disulfide bridge. Positions 404 to 502 (PVRKIITIFV…ECIETETAPL (99 aa)) constitute a Fibronectin type-III domain. Residues 527 to 547 (LAAIIGGAVALVALALLALVC) form a helical membrane-spanning segment. At 548 to 647 (WYVHRNGALF…GIPDSDHSHS (100 aa)) the chain is on the cytoplasmic side. A disordered region spans residues 620–647 (LYKNSHSESSSNRSYRDSGIPDSDHSHS).

N-glycosylated. In terms of processing, proteolytic cleavage in the juxtamembrane region gives rise to a soluble ectodomain. Cleavage is probably effected by a metalloprotease.

The protein resides in the cell membrane. It localises to the endoplasmic reticulum membrane. It is found in the cell junction. Its subcellular location is the focal adhesion. The protein localises to the secreted. The protein resides in the cell projection. It localises to the axon. It is found in the growth cone membrane. In terms of biological role, modulates the structure and function of the apical ectodermal ridge (AER) that controls embryonic limb development. Functions in cell-cell adhesion, cell migration and axon guidance, exerting an attractive or repulsive role depending on its interaction partners. Plays a role in the spatial organization of brain neurons. Plays a role in vascular development. Plays a role in cell-cell adhesion via its interaction with latrophilins that are expressed at the surface of adjacent cells. Mediates axon attraction towards cells expressing NTN1. Mediates axon growth cone collapse and plays a repulsive role in neuron guidance via its interaction with UNC-5 family members. Plays a role in the regulation of the density of glutamaergic synapses. Plays a role in fibroblast growth factor-mediated signaling cascades. Required for normal morphogenesis during embryonic development, but not for normal embryonic patterning. The chain is Leucine-rich repeat transmembrane protein FLRT3 (FLRT3) from Gallus gallus (Chicken).